Consider the following 405-residue polypeptide: Histidine decarboxylase (405 aa).

Residue His121 participates in substrate binding. Lys234 is modified (N6-(pyridoxal phosphate)lysine).

The protein belongs to the group II decarboxylase family. As to quaternary structure, homotetramer. Requires pyridoxal 5'-phosphate as cofactor.

The catalysed reaction is L-histidine + H(+) = histamine + CO2. The protein operates within siderophore biosynthesis; pseudomonine biosynthesis. The chain is Histidine decarboxylase from Pseudomonas fluorescens.